The primary structure comprises 176 residues: Adenine phosphoribosyltransferase (176 aa).

Belongs to the purine/pyrimidine phosphoribosyltransferase family. Homodimer.

Its subcellular location is the cytoplasm. It catalyses the reaction AMP + diphosphate = 5-phospho-alpha-D-ribose 1-diphosphate + adenine. The protein operates within purine metabolism; AMP biosynthesis via salvage pathway; AMP from adenine: step 1/1. In terms of biological role, catalyzes a salvage reaction resulting in the formation of AMP, that is energically less costly than de novo synthesis. In Thermobifida fusca (strain YX), this protein is Adenine phosphoribosyltransferase.